A 264-amino-acid chain; its full sequence is Thymidylate synthase (264 aa).

Arginine 21 serves as a coordination point for dUMP. A (6R)-5,10-methylene-5,6,7,8-tetrahydrofolate-binding site is contributed by histidine 51. A dUMP-binding site is contributed by 126–127 (RR). Cysteine 146 acts as the Nucleophile in catalysis. DUMP-binding positions include 166–169 (RSAD), asparagine 177, and 207–209 (HIY). Aspartate 169 contributes to the (6R)-5,10-methylene-5,6,7,8-tetrahydrofolate binding site. Alanine 263 is a (6R)-5,10-methylene-5,6,7,8-tetrahydrofolate binding site.

The protein belongs to the thymidylate synthase family. Bacterial-type ThyA subfamily. Homodimer.

The protein localises to the cytoplasm. It carries out the reaction dUMP + (6R)-5,10-methylene-5,6,7,8-tetrahydrofolate = 7,8-dihydrofolate + dTMP. It participates in pyrimidine metabolism; dTTP biosynthesis. Functionally, catalyzes the reductive methylation of 2'-deoxyuridine-5'-monophosphate (dUMP) to 2'-deoxythymidine-5'-monophosphate (dTMP) while utilizing 5,10-methylenetetrahydrofolate (mTHF) as the methyl donor and reductant in the reaction, yielding dihydrofolate (DHF) as a by-product. This enzymatic reaction provides an intracellular de novo source of dTMP, an essential precursor for DNA biosynthesis. The polypeptide is Thymidylate synthase (Brucella anthropi (strain ATCC 49188 / DSM 6882 / CCUG 24695 / JCM 21032 / LMG 3331 / NBRC 15819 / NCTC 12168 / Alc 37) (Ochrobactrum anthropi)).